Here is a 453-residue protein sequence, read N- to C-terminus: Serine incorporator 1 (453 aa).

Glycine 2 carries N-myristoyl glycine lipidation. The Cytoplasmic portion of the chain corresponds to glycine 2–arginine 39. The chain crosses the membrane as a helical span at residues leucine 40–glycine 60. Residues methionine 61 to lysine 88 are Lumenal-facing. The helical transmembrane segment at alanine 89–isoleucine 109 threads the bilayer. Residues lysine 110 to asparagine 123 are Cytoplasmic-facing. A helical transmembrane segment spans residues glycine 124–proline 144. Residues glutamate 145–valine 151 lie on the Lumenal side of the membrane. Residues tryptophan 152–isoleucine 172 form a helical membrane-spanning segment. The Cytoplasmic portion of the chain corresponds to aspartate 173–alanine 197. The chain crosses the membrane as a helical span at residues leucine 198–valine 218. Residues tyrosine 219 to alanine 231 lie on the Lumenal side of the membrane. The chain crosses the membrane as a helical span at residues phenylalanine 232–isoleucine 252. At glutamine 253–serine 259 the chain is on the cytoplasmic side. Residues glycine 260–threonine 280 form a helical membrane-spanning segment. At asparagine 281–serine 309 the chain is on the lumenal side. Residues valine 310–tyrosine 330 form a helical membrane-spanning segment. The Cytoplasmic segment spans residues serine 331–serine 387. Serine 351 is modified (phosphoserine). A Phosphothreonine modification is found at threonine 352. Phosphoserine occurs at positions 361 and 364. Residues phenylalanine 388–tyrosine 408 form a helical membrane-spanning segment. Over arginine 409 to lysine 426 the chain is Lumenal. The chain crosses the membrane as a helical span at residues isoleucine 427–leucine 447. Residues threonine 448–aspartate 453 lie on the Cytoplasmic side of the membrane.

It belongs to the TDE1 family. In terms of assembly, interacts with SPTLC1. Highly expressed in the neuronal populations such as Purkinje cells in the cerebellum, brainstem and spinal motor neurons, locus coeruleus and raphe nuclei.

It localises to the endoplasmic reticulum membrane. In terms of biological role, enhances the incorporation of serine into phosphatidylserine and sphingolipids. This is Serine incorporator 1 (Serinc1) from Mus musculus (Mouse).